A 101-amino-acid polypeptide reads, in one-letter code: UPF0125 protein VC_0850 (101 aa).

Belongs to the UPF0125 (RnfH) family.

The chain is UPF0125 protein VC_0850 from Vibrio cholerae serotype O1 (strain ATCC 39315 / El Tor Inaba N16961).